Reading from the N-terminus, the 1284-residue chain is Collagen alpha-1(XX) chain (1284 aa).

Residues 1–22 (MSSGDPAHLGLCLWLWLGATLG) form the signal peptide. A Fibronectin type-III 1 domain is found at 28–119 (ASGLLRLAVL…EFVIEDLKSS (92 aa)). The tract at residues 122–171 (DRSSQRPLGSGAPEPTPSHTGSPDPEQASEPQVAFTPSQDPRTPAGPQFR) is disordered. Positions 179–354 (DMVFLVDGSW…GALAGLLSRL (176 aa)) constitute a VWFA domain. 5 Fibronectin type-III domains span residues 379–468 (APTS…APLP), 469–559 (PPRA…TLAP), 560–647 (PRHL…TKKA), 649–738 (SPSQ…TPST), and 743–833 (PPSN…ACPA). Asn-607 is a glycosylation site (N-linked (GlcNAc...) asparagine). The Laminin G-like domain maps to 842–1037 (GFDLMVAFSL…LQMLQIVCSD (196 aa)). Disordered stretches follow at residues 1065 to 1190 (SCSS…EKGE) and 1212 to 1284 (SFHE…GLWE). Positions 1071–1082 (PGPPGPQGPPGL) are enriched in pro residues. Collagen-like domains follow at residues 1071-1127 (PGPP…IPGR) and 1133-1190 (PKGM…EKGE). 2 stretches are compositionally biased toward low complexity: residues 1112 to 1125 (LPGL…QGIP) and 1166 to 1181 (ERGP…LPGP). Over residues 1271 to 1284 (SPGQQGASTQGLWE) the composition is skewed to polar residues.

High expression in heart, lung, liver, skeletal muscle, kidney, pancreas, spleen, testis, ovary, subthalamic nucleus and fetal liver. Weak expression in other tissues tested.

It localises to the secreted. The protein localises to the extracellular space. Probable collagen protein. This Homo sapiens (Human) protein is Collagen alpha-1(XX) chain (COL20A1).